A 58-amino-acid chain; its full sequence is Protein YecU (58 aa).

The protein is Protein YecU of Escherichia coli (strain K12).